Consider the following 1212-residue polypeptide: Solute carrier family 12 member 2 (1212 aa).

Methionine 1 bears the N-acetylmethionine mark. At 1–286 (MEPRPTAPSS…AESKGVVKFG (286 aa)) the chain is on the cytoplasmic side. 3 disordered regions span residues 36 to 81 (GTAV…QSRF), 112 to 138 (GAKQTPADGEASGESEPAKGSEEAKGR), and 150 to 193 (SSAE…GGGS). 2 positions are modified to phosphoserine: serine 77 and serine 79. An RFXV motif 1 motif is present at residues 80–83 (RFQV). A compositionally biased stretch (basic and acidic residues) spans 127–137 (EPAKGSEEAKG). Positions 138 to 141 (RFRV) match the RFXV motif 2 motif. The segment covering 150–160 (SSAEDSLSDAA) has biased composition (low complexity). Phosphothreonine; by OXSR1 and STK39 is present on residues threonine 203, threonine 207, and threonine 212. Residues threonine 217 and threonine 230 each carry the phosphothreonine modification. Serine 242 is modified (phosphoserine). Residue threonine 266 is modified to Phosphothreonine. Residues 287–316 (WIKGVLVRCMLNIWGVMLFIRLSWIVGQAG) form a discontinuously helical membrane-spanning segment. Na(+) is bound at residue leucine 297. K(+) contacts are provided by asparagine 298 and isoleucine 299. Na(+) is bound at residue tryptophan 300. Chloride is bound by residues glycine 301, valine 302, and methionine 303. A helical transmembrane segment spans residues 317 to 336 (IGLSVLVIMMATVVTTITGL). The Cytoplasmic segment spans residues 337-367 (STSAIATNGFVRGGGAYYLISRSLGPEFGGA). The helical transmembrane segment at 368 to 395 (IGLIFAFANAVAVAMYVVGFAETVVELL) threads the bilayer. Phenylalanine 372 is a chloride binding site. K(+) is bound at residue tyrosine 383. The Extracellular segment spans residues 396-405 (KEHSILMIDE). Residues 406–429 (INDIRIIGAITVVILLGISVAGME) traverse the membrane as a helical segment. Residues 430–432 (WEA) are Cytoplasmic-facing. A helical membrane pass occupies residues 433–454 (KAQIVLLVILLLAIGDFVIGTF). The Extracellular portion of the chain corresponds to 455-486 (IPLESKKPKGFFGYKSEIFNENFGPDFREEET). The chain crosses the membrane as a discontinuously helical span at residues 487 to 504 (FFSVFAIFFPAATGILAG). The K(+) site is built by proline 496, alanine 497, and threonine 499. 2 residues coordinate chloride: proline 496 and alanine 497. Chloride is bound by residues glycine 500 and isoleucine 501. Residues 505 to 519 (ANISGDLADPQSAIP) are Cytoplasmic-facing. The chain crosses the membrane as a helical span at residues 520-541 (KGTLLAILITTLVYVGIAVSVG). Residues 542 to 598 (SCVVRDATGNVNDTIVTELTNCTSAACKLNFDFSSCESSPCSYGLMNNFQVMSMVSG) are Extracellular-facing. Residues asparagine 553 and asparagine 562 are each glycosylated (N-linked (GlcNAc...) asparagine). Disulfide bonds link cysteine 563-cysteine 568 and cysteine 577-cysteine 582. Residues 599 to 623 (FTPLISAGIFSATLSSALASLVSAP) traverse the membrane as a helical segment. Positions 610, 613, and 614 each coordinate Na(+). Residues 624 to 651 (KIFQALCKDNIYPAFQMFAKGYGKNNEP) are Cytoplasmic-facing. 2 consecutive transmembrane segments (helical) span residues 652–672 (LRGYILTFLIALGFILIAELN) and 673–691 (VIAPIISNFFLASYALINF). The chloride site is built by phenylalanine 682 and tyrosine 686. The Cytoplasmic segment spans residues 692-714 (SVFHASLAKSPGWRPAFKYYNMW). The next 2 membrane-spanning stretches (helical) occupy residues 715-732 (ISLLGAILCCIVMFVINW) and 733-745 (WAALLTYVIVLGL). Residues 746-1212 (YIYVTYKKPD…NHQSVLTFYS (467 aa)) lie on the Cytoplasmic side of the membrane. The scissor helix stretch occupies residues 761–778 (STQALTYLNALQHSIRLS). Serine 940 and serine 944 each carry phosphoserine. The span at 962–978 (LDTSKPLSEKPITHKVE) shows a compositional bias: basic and acidic residues. Positions 962–989 (LDTSKPLSEKPITHKVEEEDGKTATQPL) are disordered. Serine 994 is subject to Phosphoserine.

This sequence belongs to the SLC12A transporter family. As to quaternary structure, homodimer; adopts a domain-swap conformation at the scissor helices connecting the transmembrane domain and C-terminal domain. Phosphorylated at Thr-203, Thr-207 and Thr-212 by OXSR1/OSR1 and STK39/SPAK downstream of WNK kinases (WNK1, WNK2, WNK3 or WNK4), promoting its activity. Expressed in many tissues.

The protein localises to the basolateral cell membrane. It carries out the reaction K(+)(out) + 2 chloride(out) + Na(+)(out) = K(+)(in) + 2 chloride(in) + Na(+)(in). Its activity is regulated as follows. Activated following phosphorylation by OXSR1/OSR1 and STK39/SPAK downstream of WNK kinases (WNK1, WNK2, WNK3 or WNK4). Inhibited by bumetanide. Inhibited by furosemide. Its function is as follows. Cation-chloride cotransporter which mediates the electroneutral transport of chloride, potassium and/or sodium ions across the membrane. Plays a vital role in the regulation of ionic balance and cell volume. The sequence is that of Solute carrier family 12 member 2 (SLC12A2) from Homo sapiens (Human).